An 880-amino-acid polypeptide reads, in one-letter code: Endoribonuclease YSH1 (880 aa).

Zn(2+) is bound by residues H83, H85, D87, H88, H174, and D195. Residue H413 is the Proton donor of the active site. H435 contacts Zn(2+). Residues H618–H631 show a composition bias toward basic residues. Disordered regions lie at residues H618–H666 and E729–I783. Acidic residues predominate over residues E639–E652. A compositionally biased stretch (basic and acidic residues) spans S730–D745.

The protein belongs to the metallo-beta-lactamase superfamily. RNA-metabolizing metallo-beta-lactamase-like family. CPSF2/YSH1 subfamily.

It localises to the nucleus. Component of the cleavage factor I (CF I) involved in pre-mRNA 3'-end processing. The protein is Endoribonuclease YSH1 (YSH1) of Mycosarcoma maydis (Corn smut fungus).